The primary structure comprises 157 residues: Ribosome maturation factor RimP (157 aa).

It belongs to the RimP family.

It localises to the cytoplasm. Its function is as follows. Required for maturation of 30S ribosomal subunits. The protein is Ribosome maturation factor RimP of Thermus thermophilus (strain ATCC BAA-163 / DSM 7039 / HB27).